Reading from the N-terminus, the 295-residue chain is Pyridoxal 5'-phosphate synthase subunit PdxS (295 aa).

Residue Asp23 participates in D-ribose 5-phosphate binding. Lys80 serves as the catalytic Schiff-base intermediate with D-ribose 5-phosphate. Gly152 serves as a coordination point for D-ribose 5-phosphate. A D-glyceraldehyde 3-phosphate-binding site is contributed by Arg164. D-ribose 5-phosphate-binding positions include Gly213 and 234-235 (GS).

Belongs to the PdxS/SNZ family. In the presence of PdxT, forms a dodecamer of heterodimers.

It catalyses the reaction aldehydo-D-ribose 5-phosphate + D-glyceraldehyde 3-phosphate + L-glutamine = pyridoxal 5'-phosphate + L-glutamate + phosphate + 3 H2O + H(+). It functions in the pathway cofactor biosynthesis; pyridoxal 5'-phosphate biosynthesis. Functionally, catalyzes the formation of pyridoxal 5'-phosphate from ribose 5-phosphate (RBP), glyceraldehyde 3-phosphate (G3P) and ammonia. The ammonia is provided by the PdxT subunit. Can also use ribulose 5-phosphate and dihydroxyacetone phosphate as substrates, resulting from enzyme-catalyzed isomerization of RBP and G3P, respectively. The chain is Pyridoxal 5'-phosphate synthase subunit PdxS from Methanopyrus kandleri (strain AV19 / DSM 6324 / JCM 9639 / NBRC 100938).